The sequence spans 64 residues: Large ribosomal subunit protein bL32 (64 aa).

It belongs to the bacterial ribosomal protein bL32 family.

In Mycoplasma mobile (strain ATCC 43663 / 163K / NCTC 11711) (Mesomycoplasma mobile), this protein is Large ribosomal subunit protein bL32.